Consider the following 91-residue polypeptide: Small ribosomal subunit protein eS24 (91 aa).

The disordered stretch occupies residues 51–91; it reads QRRKDAAAHKEAYNAMPEAERRHLNSEKYANRKAEVSYKHR.

It belongs to the eukaryotic ribosomal protein eS24 family.

This chain is Small ribosomal subunit protein eS24, found in Caenorhabditis elegans.